Consider the following 467-residue polypeptide: Gamma-aminobutyric acid receptor subunit gamma-2 (467 aa).

The signal sequence occupies residues 1-39 (MSSPNIWSTGSSVYSTPVFSQKMTVWILLLLSLYPGFTS). Over 40–275 (QKSDDDYEDY…FDLSRRMGYF (236 aa)) the chain is Extracellular. Residues Asn-52 and Asn-129 are each glycosylated (N-linked (GlcNAc...) asparagine). Cys-190 and Cys-204 form a disulfide bridge. Asn-247 carries an N-linked (GlcNAc...) asparagine glycan. A helical membrane pass occupies residues 276–296 (TIQTYIPCTLIVVLSWVSFWI). At 297–302 (NKDAVP) the chain is on the cytoplasmic side. A helical membrane pass occupies residues 303–322 (ARTSLGITTVLTMTTLSTIA). Topologically, residues 323 to 334 (RKSLPKVSYVTA) are extracellular. A helical membrane pass occupies residues 335–359 (MDLFVSVCFIFVFSALVEYGTLHYF). Residues 360 to 443 (VSNRKPSKDK…IHIRIAKMDS (84 aa)) are Cytoplasmic-facing. The segment at 425 to 442 (RTGAWRHGRIHIRIAKMD) is interaction with GABARAP. A helical membrane pass occupies residues 444-464 (YARIFFPTAFCLFNLVYWVSY). The Extracellular segment spans residues 465–467 (LYL).

This sequence belongs to the ligand-gated ion channel (TC 1.A.9) family. Gamma-aminobutyric acid receptor (TC 1.A.9.5) subfamily. GABRG2 sub-subfamily. As to quaternary structure, heteropentamer, formed by a combination of alpha (GABRA1-6), beta (GABRB1-3), gamma (GABRG1-3), delta (GABRD), epsilon (GABRE), rho (GABRR1-3), pi (GABRP) and theta (GABRQ) chains, each subunit exhibiting distinct physiological and pharmacological properties. Interacts with GABARAP. Interacts with KIF21B. Identified in a complex of 720 kDa composed of LHFPL4, NLGN2, GABRA1, GABRB2, GABRG2 and GABRB3. Interacts with LHFPL4. Interacts with SHISA7; interaction leads to the regulation of GABA(A) receptor trafficking, channel deactivation kinetics and pharmacology. In terms of processing, palmitoylated by ZDHHC3/GODZ; required for the accumulation of GABA(A) receptors at the postsynaptic membrane of inhibitory GABAergic synapses. Glycosylated.

It is found in the postsynaptic cell membrane. Its subcellular location is the cell membrane. The protein resides in the cell projection. The protein localises to the dendrite. It localises to the cytoplasmic vesicle membrane. The catalysed reaction is chloride(in) = chloride(out). Its activity is regulated as follows. Allosterically activated by benzodiazepines. Activated by pentobarbital. Inhibited by the antagonist bicuculline. Inhibited by zinc ions. Potentiated by histamine. Functionally, gamma subunit of the heteropentameric ligand-gated chloride channel gated by gamma-aminobutyric acid (GABA), a major inhibitory neurotransmitter in the brain. GABA-gated chloride channels, also named GABA(A) receptors (GABAAR), consist of five subunits arranged around a central pore and contain GABA active binding site(s) located at the alpha and beta subunit interface(s). When activated by GABA, GABAARs selectively allow the flow of chloride anions across the cell membrane down their electrochemical gradient. Gamma-2/GABRG2-containing GABAARs are found at both synaptic and extrasynaptic sites. Chloride influx into the postsynaptic neuron following GABAAR opening decreases the neuron ability to generate a new action potential, thereby reducing nerve transmission. GABAARs containing alpha-1 and beta-2 or -3 subunits exhibit synaptogenic activity; the gamma-2 subunit being necessary but not sufficient to induce rapid synaptic contacts formation. Extrasynaptic gamma-2-containing receptors contribute to the tonic GABAergic inhibition. GABAARs function also as histamine receptor where histamine binds at the interface of two neighboring beta subunits and potentiates GABA response in a gamma-2 subunit-controlled manner. This chain is Gamma-aminobutyric acid receptor subunit gamma-2 (GABRG2), found in Pongo abelii (Sumatran orangutan).